The primary structure comprises 310 residues: p-hydroxybenzoic acid efflux pump subunit AaeA (310 aa).

The helical transmembrane segment at 12-32 (VITLLLVIIAIVLIFRIWVFY) threads the bilayer.

It belongs to the membrane fusion protein (MFP) (TC 8.A.1) family.

It localises to the cell inner membrane. In terms of biological role, forms an efflux pump with AaeB. The chain is p-hydroxybenzoic acid efflux pump subunit AaeA from Erwinia tasmaniensis (strain DSM 17950 / CFBP 7177 / CIP 109463 / NCPPB 4357 / Et1/99).